The chain runs to 85 residues: U4-theraphotoxin-Hhn1h (85 aa).

The N-terminal stretch at 1 to 22 (MKVTLIAILTCAAVLVLHTTAA) is a signal peptide. The propeptide occupies 23–48 (EELEAESQLMEVGMPDTELAAVDEER). Intrachain disulfides connect Cys52–Cys66, Cys56–Cys77, and Cys71–Cys82.

It belongs to the neurotoxin 12 (Hwtx-2) family. 02 (Hwtx-2) subfamily. In terms of tissue distribution, expressed by the venom gland.

The protein localises to the secreted. In terms of biological role, postsynaptic neurotoxin. In Cyriopagopus hainanus (Chinese bird spider), this protein is U4-theraphotoxin-Hhn1h.